The chain runs to 68 residues: Pleurocidin-like peptide WF4 (68 aa).

Positions 1–22 are cleaved as a signal peptide; that stretch reads MKFTATFLMMFIFVLMVEPGEC. The propeptide occupies 48-68; that stretch reads GEQQDLDKRAVDEDPNVIVFE.

This sequence belongs to the pleurocidin family.

Its subcellular location is the secreted. In terms of biological role, antimicrobial peptide. This Pseudopleuronectes americanus (Winter flounder) protein is Pleurocidin-like peptide WF4 (ple4).